Reading from the N-terminus, the 295-residue chain is Acetylglutamate kinase (295 aa).

Substrate contacts are provided by residues glycine 66–glycine 67, arginine 88, and asparagine 193.

The protein belongs to the acetylglutamate kinase family. ArgB subfamily.

It is found in the cytoplasm. It carries out the reaction N-acetyl-L-glutamate + ATP = N-acetyl-L-glutamyl 5-phosphate + ADP. It functions in the pathway amino-acid biosynthesis; L-arginine biosynthesis; N(2)-acetyl-L-ornithine from L-glutamate: step 2/4. Functionally, catalyzes the ATP-dependent phosphorylation of N-acetyl-L-glutamate. The chain is Acetylglutamate kinase from Bradyrhizobium diazoefficiens (strain JCM 10833 / BCRC 13528 / IAM 13628 / NBRC 14792 / USDA 110).